The following is a 646-amino-acid chain: Lipoteichoic acid synthase (646 aa).

Topologically, residues 1 to 7 are cytoplasmic; that stretch reads MSSQKKK. The helical transmembrane segment at 8 to 28 threads the bilayer; sequence ISLFAFFLLTVITITLKTYFS. The Extracellular portion of the chain corresponds to 29-43; the sequence is YYVDFSLGVKGLVQN. A helical transmembrane segment spans residues 44–64; that stretch reads LILLMNPYSLVALVLSVFLFF. The Cytoplasmic portion of the chain corresponds to 65–68; sequence KGKK. The chain crosses the membrane as a helical span at residues 69-89; that stretch reads AFWFMFIGGFLLTFLLYANVV. At 90 to 119 the chain is on the extracellular side; sequence YFRFFSDFLTFSTLNQVGNVESMGGAVSAS. The helical transmembrane segment at 120-140 threads the bilayer; that stretch reads FKWYDFVYFIDTLVYLFILIF. The Cytoplasmic segment spans residues 141–153; it reads KTKWLDTKAFSKK. A helical membrane pass occupies residues 154–174; it reads FVPVVMAASVALFFLNLAFAE. Residues 175–646 lie on the Extracellular side of the membrane; it reads TDRPELLTRT…ETGPKANSKK (472 aa). Mn(2+) contacts are provided by E255 and T300. T300 is an active-site residue. H416 provides a ligand contact to substrate. Positions 475 and 476 each coordinate Mn(2+). Residues 623-638 are compositionally biased toward basic and acidic residues; that stretch reads NPDFKKVNPSKYKYET. The tract at residues 623-646 is disordered; that stretch reads NPDFKKVNPSKYKYETGPKANSKK.

Belongs to the LTA synthase family. Post-translationally, proteolytically cleaved.

The protein resides in the cell membrane. Its subcellular location is the secreted. Its pathway is cell wall biogenesis; lipoteichoic acid biosynthesis. Catalyzes the polymerization of lipoteichoic acid (LTA) polyglycerol phosphate, a reaction that presumably uses phosphatidylglycerol (PG) as substrate. Is required for staphylococcal growth and cell division process. The sequence is that of Lipoteichoic acid synthase (ltaS) from Staphylococcus aureus (strain bovine RF122 / ET3-1).